The primary structure comprises 344 residues: Melanocyte-stimulating hormone receptor (344 aa).

At 1 to 37 (MPMQGAQRKLLGSLNSTPTATSNPGLAANHTGAPCLE) the chain is on the extracellular side. Residue Asn29 is glycosylated (N-linked (GlcNAc...) asparagine). Residues 38–63 (VSIPDGLFLSLGLVSLVENVLVVAAI) traverse the membrane as a helical segment. The Cytoplasmic portion of the chain corresponds to 64–72 (AKNRNLHSS). A helical transmembrane segment spans residues 73–93 (MYYFICCLALSDLLVSGSNML). The Extracellular segment spans residues 94–118 (ETAIILLLEAGTLATRASVVQQLHN). A helical membrane pass occupies residues 119 to 140 (TIDVLTCSSMLCSLCFLGAIAV). The Cytoplasmic segment spans residues 141-163 (DRYISIFYALRYHSIMTLPRAQR). Residues 164–183 (AIAAIWVASVLSSTLFITYY) traverse the membrane as a helical segment. The Extracellular portion of the chain corresponds to 184-191 (DHAAVLLC). A helical membrane pass occupies residues 192–211 (LVVFFLAMLVLMAVLYVHML). Residues 212-240 (ARACQHAQGIIRLHNRQLPAHKGFGLRGA) are Cytoplasmic-facing. The chain crosses the membrane as a helical span at residues 241-266 (ATLTILLGIFFLCWGPFFLHLTLVVF). Over 267-279 (CPQHLTCNCIFKN) the chain is Extracellular. Residues 280–300 (FKVFLTLIICNTIIDPLIYAF) traverse the membrane as a helical segment. The Cytoplasmic segment spans residues 301–344 (RSQELRRTLKEVLLCSSWPGCWAEGGGDSVWPGSCVTLRGPLPP). Cys315 is lipidated: S-palmitoyl cysteine.

The protein belongs to the G-protein coupled receptor 1 family. Interacts with MGRN1, but does not undergo MGRN1-mediated ubiquitination; this interaction competes with GNAS-binding and thus inhibits agonist-induced cAMP production. Interacts with OPN3; the interaction results in a decrease in MC1R-mediated cAMP signaling and ultimately a decrease in melanin production in melanocytes.

The protein resides in the cell membrane. Functionally, receptor for MSH (alpha, beta and gamma) and ACTH. The activity of this receptor is mediated by G proteins which activate adenylate cyclase. Mediates melanogenesis, the production of eumelanin (black/brown) and phaeomelanin (red/yellow), via regulation of cAMP signaling in melanocytes. In Callithrix jacchus (White-tufted-ear marmoset), this protein is Melanocyte-stimulating hormone receptor (MC1R).